We begin with the raw amino-acid sequence, 351 residues long: UDP-3-O-acylglucosamine N-acyltransferase (351 aa).

The Proton acceptor role is filled by His240.

It belongs to the transferase hexapeptide repeat family. LpxD subfamily. In terms of assembly, homotrimer.

The catalysed reaction is a UDP-3-O-[(3R)-3-hydroxyacyl]-alpha-D-glucosamine + a (3R)-hydroxyacyl-[ACP] = a UDP-2-N,3-O-bis[(3R)-3-hydroxyacyl]-alpha-D-glucosamine + holo-[ACP] + H(+). It participates in bacterial outer membrane biogenesis; LPS lipid A biosynthesis. In terms of biological role, catalyzes the N-acylation of UDP-3-O-acylglucosamine using 3-hydroxyacyl-ACP as the acyl donor. Is involved in the biosynthesis of lipid A, a phosphorylated glycolipid that anchors the lipopolysaccharide to the outer membrane of the cell. This Pseudomonas fluorescens (strain ATCC BAA-477 / NRRL B-23932 / Pf-5) protein is UDP-3-O-acylglucosamine N-acyltransferase.